A 576-amino-acid chain; its full sequence is Sodium/hydrogen exchanger 8 (576 aa).

11 helical membrane-spanning segments follow: residues 55–75 (MTIF…HLLI), 79–99 (LHFL…GAVI), 118–138 (PNMF…YSLH), 151–171 (LFAV…IYFL), 186–206 (FAFG…IFNA), 256–276 (LGYF…TGLI), 306–326 (GLAE…GIVM), 349–369 (VAFL…FSFP), 374–394 (ISFV…NIFP), 412–432 (MFIM…SLHL), and 446–466 (TTIV…MPLI). A Phosphothreonine modification is found at T505. Phosphoserine is present on residues S566 and S568.

It belongs to the monovalent cation:proton antiporter 1 (CPA1) transporter (TC 2.A.36) family. Predominantly expressed in the liver, skeletal muscle, kidney, and testis. Expressed in both renal cortex and medulla. Detected throughout the entire gastrointestinal tract, with high expression detected in stomach, duodenum and ascending colon. In gastric epithelium; expressed in the glands within the fundus and pylorus regions.

The protein localises to the golgi apparatus membrane. It is found in the golgi apparatus. It localises to the trans-Golgi network membrane. Its subcellular location is the endosome. The protein resides in the multivesicular body membrane. The protein localises to the apical cell membrane. It is found in the cytoplasmic vesicle. It localises to the secretory vesicle. Its subcellular location is the acrosome. It catalyses the reaction Na(+)(in) + H(+)(out) = Na(+)(out) + H(+)(in). In terms of biological role, na(+)/H(+) antiporter. Mediates the electoneutral exchange of intracellular H(+) ions for extracellular Na(+) in 1:1 stoichiometry. Acts as an Na(+)/H(+) exchanger in the trans-Golgi. Contributes to the regulation of pH regulation of Golgi apparatus, and consequently, in protein trafficking and endosomal morphology. Plays a crucial role in germ cells in acrosome biogenesis and sperm development, probably by playing a role in the fusion of the Golgi-derived vesicles that form the acrosomal cap. Can also be active at the cell surface of specialized cells. In the small intestine, plays a major physiological role in transepithelial absorption of Na(+). Regulates intracellular pH homeostasis of intestinal epithelial cells. Acts as an important regulator of mucosal integrity in the intestine and in the stomach, could mediate the pH fluctuation necessary for mucin exocytosis or assist membrane trafficking of other proteins. Plays a role in photoreceptor survival and in the maintenance of intracellular pH homeostasis in retinal pigment epithelium (RPE cells). In Mus musculus (Mouse), this protein is Sodium/hydrogen exchanger 8 (Slc9a8).